We begin with the raw amino-acid sequence, 373 residues long: Chaperone protein DnaJ (373 aa).

The J domain occupies 5–69 (DYYEVLGVNK…NKRVNYDQFG (65 aa)). The CR-type zinc-finger motif lies at 130–212 (GTKKEISIKK…CKGKGTENKT (83 aa)). The Zn(2+) site is built by C143, C146, C160, C163, C186, C189, C200, and C203. CXXCXGXG motif repeat units lie at residues 143-150 (CHTCNGDG), 160-167 (CSYCNGAG), 186-193 (CPKCEGSG), and 200-207 (CPTCKGKG).

The protein belongs to the DnaJ family. In terms of assembly, homodimer. Zn(2+) serves as cofactor.

It is found in the cytoplasm. Its function is as follows. Participates actively in the response to hyperosmotic and heat shock by preventing the aggregation of stress-denatured proteins and by disaggregating proteins, also in an autonomous, DnaK-independent fashion. Unfolded proteins bind initially to DnaJ; upon interaction with the DnaJ-bound protein, DnaK hydrolyzes its bound ATP, resulting in the formation of a stable complex. GrpE releases ADP from DnaK; ATP binding to DnaK triggers the release of the substrate protein, thus completing the reaction cycle. Several rounds of ATP-dependent interactions between DnaJ, DnaK and GrpE are required for fully efficient folding. Also involved, together with DnaK and GrpE, in the DNA replication of plasmids through activation of initiation proteins. This Staphylococcus epidermidis (strain ATCC 35984 / DSM 28319 / BCRC 17069 / CCUG 31568 / BM 3577 / RP62A) protein is Chaperone protein DnaJ.